Consider the following 443-residue polypeptide: ATP-dependent protease ATPase subunit HslU (443 aa).

ATP is bound by residues isoleucine 18, 60 to 65 (GVGKTE), aspartate 256, glutamate 321, and arginine 393.

Belongs to the ClpX chaperone family. HslU subfamily. As to quaternary structure, a double ring-shaped homohexamer of HslV is capped on each side by a ring-shaped HslU homohexamer. The assembly of the HslU/HslV complex is dependent on binding of ATP.

The protein resides in the cytoplasm. Its function is as follows. ATPase subunit of a proteasome-like degradation complex; this subunit has chaperone activity. The binding of ATP and its subsequent hydrolysis by HslU are essential for unfolding of protein substrates subsequently hydrolyzed by HslV. HslU recognizes the N-terminal part of its protein substrates and unfolds these before they are guided to HslV for hydrolysis. The sequence is that of ATP-dependent protease ATPase subunit HslU from Escherichia coli O157:H7 (strain EC4115 / EHEC).